Here is a 313-residue protein sequence, read N- to C-terminus: Arabinooligosaccharides transport system permease protein AraP (313 aa).

The next 6 membrane-spanning stretches (helical) occupy residues 39–59 (FVLSFLVFFLYPIISVFIMSF), 91–111 (LEYTFWTLIVLIPVPLLLAIF), 126–146 (ALFIPALTSTIVAGIIFRLIF), 176–196 (MFLMVLLASWRWMGINILYFL), 224–244 (ITLPFLKPVTVYVLTISIIGG), and 281–301 (MGYGAAIGIVLLIVILVVSLI). Residues 87–302 (LWNTLEYTFW…IVILVVSLIS (216 aa)) form the ABC transmembrane type-1 domain.

It belongs to the binding-protein-dependent transport system permease family. MalFG subfamily. In terms of assembly, the complex is composed of two ATP-binding proteins (MsmX), two transmembrane proteins (AraP and AraQ) and a solute-binding protein (AraN).

The protein localises to the cell membrane. Part of the ABC transporter complex AraNPQ involved in the uptake of arabinooligosaccharides. Transports alpha-1,5-arabinooligosaccharides, at least up to four L-arabinosyl units. Responsible for the translocation of the substrate across the membrane. This is Arabinooligosaccharides transport system permease protein AraP from Bacillus subtilis (strain 168).